The sequence spans 509 residues: MCEEYTKEKIMEIRKKHIGPSCKVFFANDPIKIVHAKGQYMFDEKGERYLDCINNVAHVGHSHPEVTKAALKQMELLNTNSRFLHDNLVRYAECLISTLPEKLSVCYFVNSGSEANDLALRLARQYTGHQDVITLDHAYHGHVTSLIDISPYKFHQLGKDAQKEYIHVAPSPDTYRGKYREDHPDPASAYAKDVEDIIQKAHQNKRQIAAFIAESMQSCGGQIIPPAGYFQKVSEFVHKAGGVFIADEVQVGFGRVGKHFWSFQLQGEDFLPDIVTMGKPIGNGHPMSCVVTTKEIAEAFGATGMEYFNTFGGNPVSCAIGLAVLDIIEKEDLRGNATTVGNYLTELLNEQKQKHPLIGDIRGVGLFVGVDLVKDRLFRTPATAEAQHIIYKLKEKRILLSADGPYRNVLKFKPPMCFNKEDAKLVVDEIDQCLTALEKAIGIQSNAGLHEKTSAKRKVHNENSGDTNAKEKETCSSNSQERNPNDHAYRQSNGLHPESPTFTRKRIRT.

N6-(pyridoxal phosphate)lysine is present on K279. Positions 451–474 (EKTSAKRKVHNENSGDTNAKEKET) are enriched in basic and acidic residues. A disordered region spans residues 451–509 (EKTSAKRKVHNENSGDTNAKEKETCSSNSQERNPNDHAYRQSNGLHPESPTFTRKRIRT).

Belongs to the class-III pyridoxal-phosphate-dependent aminotransferase family. In terms of assembly, homotetramer. Pyridoxal 5'-phosphate is required as a cofactor.

The protein localises to the mitochondrion. The enzyme catalyses phosphoethanolamine + H2O = acetaldehyde + NH4(+) + phosphate. Functionally, catalyzes the pyridoxal-phosphate-dependent breakdown of phosphoethanolamine, converting it to ammonia, inorganic phosphate and acetaldehyde. The chain is Ethanolamine-phosphate phospho-lyase (etnppl) from Xenopus laevis (African clawed frog).